A 166-amino-acid chain; its full sequence is Small ribosomal subunit protein uS5 (166 aa).

Positions 11–74 constitute an S5 DRBM domain; the sequence is LQEKLVQVNR…EAARKNMVDV (64 aa).

This sequence belongs to the universal ribosomal protein uS5 family. In terms of assembly, part of the 30S ribosomal subunit. Contacts proteins S4 and S8.

In terms of biological role, with S4 and S12 plays an important role in translational accuracy. Its function is as follows. Located at the back of the 30S subunit body where it stabilizes the conformation of the head with respect to the body. The protein is Small ribosomal subunit protein uS5 of Marinobacter nauticus (strain ATCC 700491 / DSM 11845 / VT8) (Marinobacter aquaeolei).